The primary structure comprises 366 residues: Carbamoyl phosphate synthase small chain (366 aa).

The CPSase stretch occupies residues 1–174 (MQEIPAILVL…GERYTVDNPD (174 aa)). L-glutamine is bound by residues Ser48, Gly226, and Gly228. Residues 178–366 (HVVAFDYGIK…FTELMERLKN (189 aa)) enclose the Glutamine amidotransferase type-1 domain. The active-site Nucleophile is Cys256. Leu257, Gln260, Asn298, Gly300, and Phe301 together coordinate L-glutamine. Residues His340 and Glu342 contribute to the active site.

It belongs to the CarA family. In terms of assembly, composed of two chains; the small (or glutamine) chain promotes the hydrolysis of glutamine to ammonia, which is used by the large (or ammonia) chain to synthesize carbamoyl phosphate. Tetramer of heterodimers (alpha,beta)4.

It carries out the reaction hydrogencarbonate + L-glutamine + 2 ATP + H2O = carbamoyl phosphate + L-glutamate + 2 ADP + phosphate + 2 H(+). The catalysed reaction is L-glutamine + H2O = L-glutamate + NH4(+). The protein operates within amino-acid biosynthesis; L-arginine biosynthesis; carbamoyl phosphate from bicarbonate: step 1/1. Its pathway is pyrimidine metabolism; UMP biosynthesis via de novo pathway; (S)-dihydroorotate from bicarbonate: step 1/3. In terms of biological role, small subunit of the glutamine-dependent carbamoyl phosphate synthetase (CPSase). CPSase catalyzes the formation of carbamoyl phosphate from the ammonia moiety of glutamine, carbonate, and phosphate donated by ATP, constituting the first step of 2 biosynthetic pathways, one leading to arginine and/or urea and the other to pyrimidine nucleotides. The small subunit (glutamine amidotransferase) binds and cleaves glutamine to supply the large subunit with the substrate ammonia. The polypeptide is Carbamoyl phosphate synthase small chain (Chlorobaculum tepidum (strain ATCC 49652 / DSM 12025 / NBRC 103806 / TLS) (Chlorobium tepidum)).